Here is a 200-residue protein sequence, read N- to C-terminus: NAD(P)H dehydrogenase (quinone) (200 aa).

In terms of domain architecture, Flavodoxin-like spans 4 to 191 (VLVLYYSSYG…DIARYQGKHV (188 aa)). FMN is bound by residues 10 to 15 (SSYGHV) and 79 to 81 (TRF). An NAD(+)-binding site is contributed by Tyr12. Position 99 (Trp99) interacts with substrate. FMN-binding positions include 114-120 (STGTQHG) and His135.

It belongs to the WrbA family. The cofactor is FMN.

The enzyme catalyses a quinone + NADH + H(+) = a quinol + NAD(+). The catalysed reaction is a quinone + NADPH + H(+) = a quinol + NADP(+). This chain is NAD(P)H dehydrogenase (quinone), found in Burkholderia orbicola (strain MC0-3).